We begin with the raw amino-acid sequence, 69 residues long: Beta-defensin 122 (69 aa).

Positions 1–19 are cleaved as a signal peptide; the sequence is MKPFLVTLAVLLLFFQVTA. 3 disulfide bridges follow: Cys26–Cys53, Cys33–Cys47, and Cys37–Cys54.

This sequence belongs to the beta-defensin family.

It localises to the secreted. Has antibacterial activity. This is Beta-defensin 122 (DEFB122) from Macaca mulatta (Rhesus macaque).